Consider the following 181-residue polypeptide: Crossover junction endodeoxyribonuclease RuvC (181 aa).

Active-site residues include Asp7, Glu67, and Asp139. Positions 7, 67, and 139 each coordinate Mg(2+).

This sequence belongs to the RuvC family. In terms of assembly, homodimer which binds Holliday junction (HJ) DNA. The HJ becomes 2-fold symmetrical on binding to RuvC with unstacked arms; it has a different conformation from HJ DNA in complex with RuvA. In the full resolvosome a probable DNA-RuvA(4)-RuvB(12)-RuvC(2) complex forms which resolves the HJ. The cofactor is Mg(2+).

Its subcellular location is the cytoplasm. It catalyses the reaction Endonucleolytic cleavage at a junction such as a reciprocal single-stranded crossover between two homologous DNA duplexes (Holliday junction).. The RuvA-RuvB-RuvC complex processes Holliday junction (HJ) DNA during genetic recombination and DNA repair. Endonuclease that resolves HJ intermediates. Cleaves cruciform DNA by making single-stranded nicks across the HJ at symmetrical positions within the homologous arms, yielding a 5'-phosphate and a 3'-hydroxyl group; requires a central core of homology in the junction. The consensus cleavage sequence is 5'-(A/T)TT(C/G)-3'. Cleavage occurs on the 3'-side of the TT dinucleotide at the point of strand exchange. HJ branch migration catalyzed by RuvA-RuvB allows RuvC to scan DNA until it finds its consensus sequence, where it cleaves and resolves the cruciform DNA. In Cupriavidus metallidurans (strain ATCC 43123 / DSM 2839 / NBRC 102507 / CH34) (Ralstonia metallidurans), this protein is Crossover junction endodeoxyribonuclease RuvC.